The primary structure comprises 345 residues: Trace amine-associated receptor 6 (345 aa).

Topologically, residues 1 to 32 (MGSNSSPPAVLQLCYENVNGSCVKTPYSPGPR) are extracellular. An N-linked (GlcNAc...) asparagine glycan is attached at Asn-19. Cystine bridges form between Cys-22-Cys-186 and Cys-105-Cys-190. Residues 33 to 53 (VLLYAVFGFGAVLAVFGNLLV) form a helical membrane-spanning segment. Topologically, residues 54-68 (MISILHFKQLHSPTN) are cytoplasmic. A helical membrane pass occupies residues 69 to 89 (FLIASLACADFWVGVSVMPFS). Residues 90-107 (MVRSIESCWYFGRSFCTF) are Extracellular-facing. A helical membrane pass occupies residues 108–128 (HTCCDVAFCYSSLFHLSFISI). Over 129 to 147 (DRYIAVTDPLVYPTKFTVS) the chain is Cytoplasmic. Residues 148 to 168 (VSGICISISWILPLAYSGAVF) form a helical membrane-spanning segment. The Extracellular portion of the chain corresponds to 169-202 (YTGVYADGLEEVSDAVNCVGGCQVVVNQNWVLID). Residues 203–223 (FLSFLIPTLVMIILYGNIFLV) form a helical membrane-spanning segment. Residues 224 to 259 (ARQQAKKIETVGNKAESSSESYKARVARRERKAAKT) lie on the Cytoplasmic side of the membrane. A helical membrane pass occupies residues 260–276 (LGITVVAFMISWLPYSI). Topologically, residues 277–282 (DSLVDA) are extracellular. A helical membrane pass occupies residues 283 to 302 (FMGFITPAYIYEICVWCAYY). At 303–345 (NSAMNPLIYALFYPWFKKAIKVIMSGQVFKNSSATMNLFSEQI) the chain is on the cytoplasmic side.

Belongs to the G-protein coupled receptor 1 family.

Its subcellular location is the cell membrane. Its function is as follows. Olfactory receptor specific for trace amines, such as beta-phenylethylamine (beta-PEA). Trace amine compounds are enriched in animal body fluids and act on trace amine-associated receptors (TAARs) to elicit both intraspecific and interspecific innate behaviors. Beta-PEA-binding causes a conformation change that triggers signaling via G(s)-class of G alpha proteins (GNAL or GNAS). In Rattus norvegicus (Rat), this protein is Trace amine-associated receptor 6 (Taar6).